A 289-amino-acid chain; its full sequence is Phospholipase C (289 aa).

A signal peptide spans 1–25 (MKFKKVVLGMCLIASVLVFPVTIKA). Positions 26 to 51 (NACCDEYLQTPAAPHDIDSKLPHKLS) are excised as a propeptide. Zn(2+)-binding residues include Trp-52, His-65, Asp-106, His-120, His-169, Asp-173, His-179, His-193, and Glu-197. One can recognise a Zn-dependent PLC domain in the interval 52 to 289 (WSADNPTNTD…LEFWSKKTNE (238 aa)).

This sequence belongs to the bacterial zinc-metallophospholipase C family. Forms monomers, dimers and higher order oligomers, but only the monomer is enzymatically active. The cofactor is Zn(2+).

The protein resides in the secreted. It catalyses the reaction a 1,2-diacyl-sn-glycero-3-phosphocholine + H2O = phosphocholine + a 1,2-diacyl-sn-glycerol + H(+). The catalysed reaction is 1,2-dihexadecanoyl-sn-glycero-3-phosphocholine + H2O = 1,2-dihexadecanoyl-sn-glycerol + phosphocholine + H(+). The enzyme catalyses 1-hexadecanoyl-2-(9Z-octadecenoyl)-sn-glycero-3-phosphocholine + H2O = 1-hexadecanoyl-2-(9Z-octadecenoyl)-sn-glycerol + phosphocholine + H(+). It carries out the reaction 1,2-di-(9Z-octadecenoyl)-sn-glycero-3-phosphocholine + H2O = 1,2-di-(9Z-octadecenoyl)-sn-glycerol + phosphocholine + H(+). It catalyses the reaction a 1,2-diacyl-sn-glycero-3-phosphoethanolamine + H2O = phosphoethanolamine + a 1,2-diacyl-sn-glycerol + H(+). The catalysed reaction is 1,2-di-(9Z-octadecenoyl)-sn-glycero-3-phosphoethanolamine + H2O = phosphoethanolamine + 1,2-di-(9Z-octadecenoyl)-sn-glycerol + H(+). The enzyme catalyses 1,2-dihexadecanoyl-sn-glycero-3-phosphoethanolamine + H2O = 1,2-dihexadecanoyl-sn-glycerol + phosphoethanolamine + H(+). It carries out the reaction a 1,2-diacyl-sn-glycero-3-phospho-L-serine + H2O = O-phospho-L-serine + a 1,2-diacyl-sn-glycerol + H(+). It catalyses the reaction a 1,2-diacyl-sn-glycero-3-phosphoglycerol + H2O = glycerol 1-phosphate + a 1,2-diacyl-sn-glycerol + H(+). The catalysed reaction is a 1,2-diacyl-sn-glycero-3-phospho-(1D-myo-inositol) + H2O = 1D-myo-inositol 1-phosphate + a 1,2-diacyl-sn-glycerol + H(+). The enzyme catalyses a sphingomyelin + H2O = phosphocholine + an N-acylsphing-4-enine + H(+). It carries out the reaction a 1-O-(1Z-alkenyl)-2-acyl-sn-glycero-3-phosphoethanolamine + H2O = a 1-O-(1Z-alkenyl)-2-acyl-sn-glycerol + phosphoethanolamine + H(+). Enzymatic activity of LmPC-PLC can be specifically inhibited by its propeptide added in trans. The tendency of the enzyme to oligomerize, which appears to largely attenuate the enzymatic activity, may be one of the mechanisms regulating phospholipase activity in the host cell during the different steps of the infection cycle of L.monocytogenes. Enzyme activity is inhibited by EDTA and o-phenanthroline in vitro. Functionally, major virulence factor whose phospholipase activity facilitates pore formation by the pore-forming toxin listeriolysin O (LLO), leading to vacuolar membrane disruption and vacuolar escape of L.monocytogenes, which enables the bacterium to spread in the host. Acts as a phospholipase C exhibiting broad substrate specificity, with the highest activities towards diacylglycerophospholipids with phosphocholine, phosphoserine, and phosphoethanolamine head groups, but less towards phosphoglycerol or phosphoinositol head groups. Is also able to hydrolyze sphingomyelin and plasmenylethanolamine. This is Phospholipase C from Listeria monocytogenes serovar 1/2a (strain ATCC BAA-679 / EGD-e).